A 356-amino-acid polypeptide reads, in one-letter code: Putative transposase y4zB (356 aa).

Over residues 1-19 (MITTGTPTTRRSAAGTAGA) the composition is skewed to low complexity. 2 disordered regions span residues 1–54 (MITT…PLAD) and 334–356 (PPPV…FAYV).

The protein belongs to the transposase 11 family.

The polypeptide is Putative transposase y4zB (Sinorhizobium fredii (strain NBRC 101917 / NGR234)).